The following is a 142-amino-acid chain: Large ribosomal subunit protein uL11 (142 aa).

The protein belongs to the universal ribosomal protein uL11 family. As to quaternary structure, part of the ribosomal stalk of the 50S ribosomal subunit. Interacts with L10 and the large rRNA to form the base of the stalk. L10 forms an elongated spine to which L12 dimers bind in a sequential fashion forming a multimeric L10(L12)X complex. One or more lysine residues are methylated.

Functionally, forms part of the ribosomal stalk which helps the ribosome interact with GTP-bound translation factors. In Photobacterium profundum (strain SS9), this protein is Large ribosomal subunit protein uL11.